We begin with the raw amino-acid sequence, 77 residues long: Conotoxin LiC42 (77 aa).

The signal sequence occupies residues 1–22 (MKLTCVLIIAVLFLTASQLITA). The propeptide occupies 23-47 (DYSRDKQEYGAERLRDAMGKFKGSR). Cystine bridges form between Cys49-Cys62, Cys56-Cys67, and Cys61-Cys76.

The protein belongs to the conotoxin O1 superfamily. Expressed by the venom duct.

Its subcellular location is the secreted. This is Conotoxin LiC42 from Conus lividus (Livid cone).